We begin with the raw amino-acid sequence, 594 residues long: Potassium-transporting ATPase potassium-binding subunit (594 aa).

The next 10 helical transmembrane spans lie at 3–23, 67–87, 136–156, 179–199, 287–307, 314–334, 415–435, 453–473, 519–539, and 562–582; these read ADFL…APLL, AVAM…LQRL, ALTV…IALV, LYVL…QGVV, LEML…GEMV, VAIL…AAYF, GLYG…LMIG, VALV…VAVL, VLLG…ILAL, and LFVA…YVPA.

It belongs to the KdpA family. In terms of assembly, the system is composed of three essential subunits: KdpA, KdpB and KdpC.

It is found in the cell inner membrane. Its function is as follows. Part of the high-affinity ATP-driven potassium transport (or Kdp) system, which catalyzes the hydrolysis of ATP coupled with the electrogenic transport of potassium into the cytoplasm. This subunit binds the periplasmic potassium ions and delivers the ions to the membrane domain of KdpB through an intramembrane tunnel. In Bordetella parapertussis (strain 12822 / ATCC BAA-587 / NCTC 13253), this protein is Potassium-transporting ATPase potassium-binding subunit.